The sequence spans 688 residues: MPKHQSGSPTDSSDLLLSGKKQRPHLALRRKRRREMRKINRKVPRMNLVPIKEKTAWQHLQALISEAEEVLKTSQTPQTSLTLFLALLSVLGPPPVTGESYWAYLPKPPILHPVGWGSTDPIRVLTNQTMYLGGSPDFHGFRNMSGNVHFEGKSDTLPICLSFSFSTPTGCFQVDKQVFLSDTPTVDNNKPGGKGDKRRMWELWLTTLGNSGANTKLVPIKKKLPPKYPHCQIAFKKDAFWEGDESAPPRWLPCAFPDQGVSFSPKGALGLLWDFSLPSPSVDQSDQIKSKKNLFGNYTPPVNKEVHRWYEAGWVEPTWFWENSPKDPNDRDFTALVPHTELFRLVAASRHLILKRPGFQEHEMIPTSACVTYPYAILLGLPQLIDIEKRGSTFHISCSSCRLTNCLDSSAYDYAAIIVKRPPYVLLPVDIGDEPWFDDSAIQTFRYATDLIRAKRFVAAIILGISALIAIITSFAVATTALVKEMQTATFVNNLHRNVTLALSEQRIIDLKLEARLNALEEVVLELGQDVANLKTRMSTRCHANYDFICVTPLPYNATENWERTRAHLLGIWNDNEISYNIQELTNLISDMSKQHIDAVDLSGLAQSFANGVKALNPLDWTQYFIFIGVGALLLVIVLMIFPIVFQCLAKSLDQVQSDLNVLLLKKKKGGNAAPAAEMVELPRVSYT.

The span at Met-1–Leu-15 shows a compositional bias: polar residues. The disordered stretch occupies residues Met-1–Arg-37. Residues Met-1–Gly-98 form the signal peptide. The segment covering Lys-20–Arg-37 has biased composition (basic residues). The Extracellular portion of the chain corresponds to Glu-99–Tyr-624. N-linked (GlcNAc...) asparagine; by host glycans are attached at residues Asn-127 and Asn-143. Residues Leu-426–Ser-474 are a coiled coil. The propeptide occupies Lys-455–Arg-456. The fusion peptide stretch occupies residues Phe-457–Val-477. Residues Leu-463 to Ala-481 are immunosuppression. Asn-498 carries an N-linked (GlcNAc...) asparagine; by host glycan. Positions Leu-511–Arg-541 form a coiled coil. Residue Asn-557 is glycosylated (N-linked (GlcNAc...) asparagine; by host). Residues Phe-625 to Val-645 traverse the membrane as a helical segment. The Cytoplasmic segment spans residues Phe-646–Thr-688.

In terms of assembly, the mature envelope protein (Env) consists of a trimer of SU-TM heterodimers attached by noncovalent interactions or by a labile interchain disulfide bond. Post-translationally, specific enzymatic cleavages in vivo yield mature proteins. Envelope glycoproteins are synthesized as an inactive precursor that is N-glycosylated and processed likely by host cell furin or by a furin-like protease in the Golgi to yield the mature SU and TM proteins. The cleavage site between SU and TM requires the minimal sequence [KR]-X-[KR]-R.

It localises to the virion membrane. Its subcellular location is the host cell membrane. In terms of biological role, the surface protein (SU) attaches the virus to the host cell by binding to its receptor. This interaction triggers the refolding of the transmembrane protein (TM) and is thought to activate its fusogenic potential by unmasking its fusion peptide. Fusion occurs at the host cell plasma membrane. The transmembrane protein (TM) acts as a class I viral fusion protein. Under the current model, the protein has at least 3 conformational states: pre-fusion native state, pre-hairpin intermediate state, and post-fusion hairpin state. During viral and target cell membrane fusion, the coiled coil regions (heptad repeats) assume a trimer-of-hairpins structure, positioning the fusion peptide in close proximity to the C-terminal region of the ectodomain. The formation of this structure appears to drive apposition and subsequent fusion of viral and target cell membranes. Membranes fusion leads to delivery of the nucleocapsid into the cytoplasm. The polypeptide is Envelope glycoprotein gp70 (env) (Mouse mammary tumor virus (strain BR6) (MMTV)).